We begin with the raw amino-acid sequence, 287 residues long: Acetyl-coenzyme A carboxylase carboxyl transferase subunit beta (287 aa).

In terms of domain architecture, CoA carboxyltransferase N-terminal spans 25–287 (IWTKCSGCVQ…KLTQQSFSEK (263 aa)). Zn(2+) contacts are provided by C29, C32, C48, and C51. The C4-type zinc-finger motif lies at 29–51 (CSGCVQLLYTKELERNLQVCPKC).

This sequence belongs to the AccD/PCCB family. As to quaternary structure, acetyl-CoA carboxylase is a heterohexamer composed of biotin carboxyl carrier protein (AccB), biotin carboxylase (AccC) and two subunits each of ACCase subunit alpha (AccA) and ACCase subunit beta (AccD). It depends on Zn(2+) as a cofactor.

It localises to the cytoplasm. The enzyme catalyses N(6)-carboxybiotinyl-L-lysyl-[protein] + acetyl-CoA = N(6)-biotinyl-L-lysyl-[protein] + malonyl-CoA. Its pathway is lipid metabolism; malonyl-CoA biosynthesis; malonyl-CoA from acetyl-CoA: step 1/1. Functionally, component of the acetyl coenzyme A carboxylase (ACC) complex. Biotin carboxylase (BC) catalyzes the carboxylation of biotin on its carrier protein (BCCP) and then the CO(2) group is transferred by the transcarboxylase to acetyl-CoA to form malonyl-CoA. The polypeptide is Acetyl-coenzyme A carboxylase carboxyl transferase subunit beta (Blochmanniella floridana).